The following is a 285-amino-acid chain: MVKKWLIQFAVMLSVLSTFTYSASAVGVTAITGNNSFDTAMPIGYWKYKNIDTTILEAGQDEAYFTFTANKGEKVYMRSTYQSAYTGMKIEIYDKNRIPVSQGTEVINPNTFSSFIYANADAQNTTDTFYVKVSRGTYTGNMYFTLSIEDRIKSGSGTFQFSGVAENKGNTSLSPSGSDSSVIKVDLTNQSGIPRDAIVTRVQTTATQTPSQGNTRHLIMTSENNEWSRALVNSSTSGSYDISLSDQLSVAKVWSFKYNTLATARSTMSNVKAKIDYEYDVTKQF.

A signal peptide spans methionine 1 to alanine 25.

This is an uncharacterized protein from Bacillus subtilis (strain 168).